We begin with the raw amino-acid sequence, 232 residues long: MASISSLHRWASNQHSRLPRITSISEADQSRPINQVVAFSVPISRRDASIILLSSIPLTSFFVLTPSSSEARERRSRKVIPLEEYSTGPEGLKFYDIEEGKGPVATEGSTAQVHFDCRYRSITAISTRESKLLAGNRSIAQPYEFKVGSTPGKERKREFVDNPNGLFSAQAAPKPPPAMYFITEGMKVGGKRTVIVPPEAGYGQKGMNEIPPGATFELNIELLRVTPPPEEK.

In terms of domain architecture, PPIase FKBP-type spans 108–226 (GSTAQVHFDC…ELNIELLRVT (119 aa)).

Belongs to the FKBP-type PPIase family.

The protein localises to the plastid. Its subcellular location is the chloroplast thylakoid lumen. The catalysed reaction is [protein]-peptidylproline (omega=180) = [protein]-peptidylproline (omega=0). In terms of biological role, PPIases accelerate the folding of proteins. It catalyzes the cis-trans isomerization of proline imidic peptide bonds in oligopeptides. This Arabidopsis thaliana (Mouse-ear cress) protein is Peptidyl-prolyl cis-trans isomerase FKBP18, chloroplastic (FKBP18).